Consider the following 899-residue polypeptide: Translation initiation factor IF-2 (899 aa).

Disordered stretches follow at residues 115-137 (EAKA…LQTE), 170-189 (RGGG…EQKK), and 262-309 (DREI…HGFE). A tr-type G domain is found at 399–568 (TRPPVVTIMG…LIQSELMELK (170 aa)). Positions 408–415 (GHVDHGKT) are G1. 408–415 (GHVDHGKT) is a GTP binding site. A G2 region spans residues 433 to 437 (GITQH). The tract at residues 454-457 (DTPG) is G3. GTP contacts are provided by residues 454-458 (DTPGH) and 508-511 (NKMD). Residues 508-511 (NKMD) form a G4 region. The tract at residues 544–546 (SAH) is G5.

This sequence belongs to the TRAFAC class translation factor GTPase superfamily. Classic translation factor GTPase family. IF-2 subfamily.

The protein resides in the cytoplasm. Its function is as follows. One of the essential components for the initiation of protein synthesis. Protects formylmethionyl-tRNA from spontaneous hydrolysis and promotes its binding to the 30S ribosomal subunits. Also involved in the hydrolysis of GTP during the formation of the 70S ribosomal complex. In Acinetobacter baumannii (strain SDF), this protein is Translation initiation factor IF-2.